The sequence spans 78 residues: Large ribosomal subunit protein bL28 (78 aa).

The protein belongs to the bacterial ribosomal protein bL28 family.

The protein is Large ribosomal subunit protein bL28 of Synechococcus sp. (strain CC9605).